The sequence spans 124 residues: Fluoride-specific ion channel FluC (124 aa).

The next 4 membrane-spanning stretches (helical) occupy residues 4–24 (IFYI…TTLV), 35–55 (YATF…FGYL), 63–83 (PYLK…FSAF), and 96–116 (ILIA…ATWT). The Na(+) site is built by Gly-75 and Thr-78.

Belongs to the fluoride channel Fluc/FEX (TC 1.A.43) family.

The protein localises to the cell inner membrane. It carries out the reaction fluoride(in) = fluoride(out). Its activity is regulated as follows. Na(+) is not transported, but it plays an essential structural role and its presence is essential for fluoride channel function. Fluoride-specific ion channel. Important for reducing fluoride concentration in the cell, thus reducing its toxicity. This is Fluoride-specific ion channel FluC from Flavobacterium psychrophilum (strain ATCC 49511 / DSM 21280 / CIP 103535 / JIP02/86).